The following is a 304-amino-acid chain: MSYRGLTILGCSSQQPTRHRNHGAYLLRWNGEGLLFDPGEGTQRQFIYANIAPTVVSRIFISHFHGDHCLGLGSMLMRLNLDRVSHPIHCYYPASGKKYFDRLRYSTIYHETIKVIEHPIDREGIVEDFGNFRIESRQLDHLVDTLGWRITEPDTTKFIPEKIKAAGLKGPIMQELINKGRVKVNDTIVHLDDVSYTRKGDSIAVVADSLPCQAIVDLARNARILLCESTYLEEHSHLAKSHYHMTAKQAAEQAKRAEVQQLILTHFSARYNTTEEFVQEAGEIFPNVFAAEEFCSYEFPKNPS.

Zn(2+)-binding residues include His63, His65, Asp67, His68, His141, Asp208, and His266. The active-site Proton acceptor is the Asp67.

Belongs to the RNase Z family. In terms of assembly, homodimer. It depends on Zn(2+) as a cofactor.

It catalyses the reaction Endonucleolytic cleavage of RNA, removing extra 3' nucleotides from tRNA precursor, generating 3' termini of tRNAs. A 3'-hydroxy group is left at the tRNA terminus and a 5'-phosphoryl group is left at the trailer molecule.. Functionally, zinc phosphodiesterase, which displays some tRNA 3'-processing endonuclease activity. Probably involved in tRNA maturation, by removing a 3'-trailer from precursor tRNA. The chain is Ribonuclease Z from Chlamydia trachomatis serovar L2 (strain ATCC VR-902B / DSM 19102 / 434/Bu).